We begin with the raw amino-acid sequence, 244 residues long: tRNA pseudouridine synthase A (244 aa).

The active-site Nucleophile is aspartate 52. Tyrosine 110 is a binding site for substrate.

Belongs to the tRNA pseudouridine synthase TruA family. Homodimer.

It catalyses the reaction uridine(38/39/40) in tRNA = pseudouridine(38/39/40) in tRNA. In terms of biological role, formation of pseudouridine at positions 38, 39 and 40 in the anticodon stem and loop of transfer RNAs. This chain is tRNA pseudouridine synthase A, found in Clostridium botulinum (strain Eklund 17B / Type B).